The sequence spans 129 residues: V-type proton ATPase subunit F 2 (129 aa).

This sequence belongs to the V-ATPase F subunit family. V-ATPase is a heteromultimeric enzyme made up of two complexes: the ATP-hydrolytic V1 complex and the proton translocation V0 complex. The V1 complex consists of three catalytic AB heterodimers that form a heterohexamer, three peripheral stalks each consisting of EG heterodimers, one central rotor including subunits D and F, and the regulatory subunits C and H. The proton translocation complex V0 consists of the proton transport subunit a, a ring of proteolipid subunits c9c'', rotary subunit d, subunits e and f, and the accessory subunits VhaAC45 and ATP6AP2.

In terms of biological role, subunit of the V1 complex of vacuolar(H+)-ATPase (V-ATPase), a multisubunit enzyme composed of a peripheral complex (V1) that hydrolyzes ATP and a membrane integral complex (V0) that translocates protons. V-ATPase is responsible for acidifying and maintaining the pH of intracellular compartments and in some cell types, is targeted to the plasma membrane, where it is responsible for acidifying the extracellular environment. This Drosophila melanogaster (Fruit fly) protein is V-type proton ATPase subunit F 2 (Vha14-2).